The primary structure comprises 137 residues: Large-conductance mechanosensitive channel (137 aa).

3 helical membrane passes run Ile-15–Val-35, Ile-38–Gln-58, and Gly-80–Val-100.

This sequence belongs to the MscL family. As to quaternary structure, homopentamer.

Its subcellular location is the cell inner membrane. Its function is as follows. Channel that opens in response to stretch forces in the membrane lipid bilayer. May participate in the regulation of osmotic pressure changes within the cell. The chain is Large-conductance mechanosensitive channel from Bartonella henselae (strain ATCC 49882 / DSM 28221 / CCUG 30454 / Houston 1) (Rochalimaea henselae).